We begin with the raw amino-acid sequence, 289 residues long: YLVNPAAYAALGAYMFLLILIGFPVNFLTLYVTIEHKKLRTPLNYILLNLAVANLFMVLGGFTTTMYTSMHGYFVLGRLGCNLEGFFATMGGEIALWSLVVLAIERWIVVCKPISNFRFTEDHAIMGLAFTWVMALSCAVPPLVGWSRYIPEGMQCSCGVDYYTRAEGFNNESFVIYMFIVHFLTPLIIISFCYGRLLCAVKEAAAAQQESETTQRAEREVSRMVVMMVISFLMCWLPYASVAWYIFCNQGSEFGPIFMTLPAFFAKSSAIYNPLIYICMNKQFRHCMI.

Residues 1-7 (YLVNPAA) lie on the Extracellular side of the membrane. A helical membrane pass occupies residues 8-32 (YAALGAYMFLLILIGFPVNFLTLYV). Topologically, residues 33 to 44 (TIEHKKLRTPLN) are cytoplasmic. Residues 45–67 (YILLNLAVANLFMVLGGFTTTMY) form a helical membrane-spanning segment. Topologically, residues 68–81 (TSMHGYFVLGRLGC) are extracellular. Cysteine 81 and cysteine 158 are oxidised to a cystine. Residues 82-104 (NLEGFFATMGGEIALWSLVVLAI) traverse the membrane as a helical segment. The 'Ionic lock' involved in activated form stabilization signature appears at 105–107 (ERW). Topologically, residues 105-123 (ERWIVVCKPISNFRFTEDH) are cytoplasmic. Residues 124–144 (AIMGLAFTWVMALSCAVPPLV) form a helical membrane-spanning segment. Residues 145–173 (GWSRYIPEGMQCSCGVDYYTRAEGFNNES) are Extracellular-facing. Asparagine 171 is a glycosylation site (N-linked (GlcNAc...) asparagine). A helical transmembrane segment spans residues 174 to 195 (FVIYMFIVHFLTPLIIISFCYG). Residues 196-223 (RLLCAVKEAAAAQQESETTQRAEREVSR) are Cytoplasmic-facing. The helical transmembrane segment at 224 to 245 (MVVMMVISFLMCWLPYASVAWY) threads the bilayer. Residues 246–257 (IFCNQGSEFGPI) are Extracellular-facing. A helical transmembrane segment spans residues 258-279 (FMTLPAFFAKSSAIYNPLIYIC). The residue at position 267 (lysine 267) is an N6-(retinylidene)lysine. The Cytoplasmic segment spans residues 280-289 (MNKQFRHCMI).

This sequence belongs to the G-protein coupled receptor 1 family. Opsin subfamily. In terms of processing, phosphorylated on some or all of the serine and threonine residues present in the C-terminal region. Post-translationally, contains one covalently linked retinal chromophore.

It localises to the membrane. The protein resides in the cell projection. Its subcellular location is the cilium. The protein localises to the photoreceptor outer segment. Functionally, photoreceptor required for image-forming vision at low light intensity. While most salt water fish species use retinal as chromophore, most freshwater fish use 3-dehydroretinal, or a mixture of retinal and 3-dehydroretinal. Light-induced isomerization of 11-cis to all-trans retinal triggers a conformational change that activates signaling via G-proteins. Subsequent receptor phosphorylation mediates displacement of the bound G-protein alpha subunit by arrestin and terminates signaling. In Cottocomephorus inermis (Longfin Baikal sculpin), this protein is Rhodopsin (rho).